Reading from the N-terminus, the 409-residue chain is Elongation factor Tu, chloroplastic (409 aa).

Residues 10 to 214 (KQHVNIGTIG…NVDTYIPTPV (205 aa)) form the tr-type G domain. A G1 region spans residues 19–26 (GHVDHGKT). Residue 19–26 (GHVDHGKT) participates in GTP binding. Threonine 26 is a Mg(2+) binding site. Positions 60–64 (GITIN) are G2. The segment at 81 to 84 (DCPG) is G3. GTP is bound by residues 81-85 (DCPGH) and 136-139 (NKED). A G4 region spans residues 136 to 139 (NKED). Positions 174–176 (SAL) are G5.

The protein belongs to the TRAFAC class translation factor GTPase superfamily. Classic translation factor GTPase family. EF-Tu/EF-1A subfamily.

The protein localises to the plastid. The protein resides in the chloroplast. The catalysed reaction is GTP + H2O = GDP + phosphate + H(+). In terms of biological role, GTP hydrolase that promotes the GTP-dependent binding of aminoacyl-tRNA to the A-site of ribosomes during protein biosynthesis. This Tupiella akineta (Green alga) protein is Elongation factor Tu, chloroplastic (tufA).